Consider the following 155-residue polypeptide: Riboflavin kinase (155 aa).

ATP contacts are provided by Gly-15, Lys-21, Thr-27, and Asn-29. Residues Thr-27 and Asn-29 each contribute to the Mg(2+) site. The active-site Nucleophile is the Glu-79. ATP-binding residues include Ile-82, His-84, and Tyr-91. FMN is bound by residues Arg-104, Lys-107, and Phe-109.

In terms of assembly, monomer. Directly interacts with TNFRSF1A death domain; this interaction may be supported by TRADD. In the absence of TNFRSF1A, interacts with TRADD. Independently of TNFRSF1A, interacts with the NADPH oxidase subunit CYBA. The cofactor is Zn(2+). Mg(2+) serves as cofactor.

The protein resides in the cytoplasm. It carries out the reaction riboflavin + ATP = FMN + ADP + H(+). It participates in cofactor biosynthesis; FMN biosynthesis; FMN from riboflavin (ATP route): step 1/1. Functionally, catalyzes the phosphorylation of riboflavin (vitamin B2) to form flavin-mononucleotide (FMN), hence rate-limiting enzyme in the synthesis of FAD. Essential for TNF-induced reactive oxygen species (ROS) production. Through its interaction with both TNFRSF1A and CYBA, physically and functionally couples TNFRSF1A to NADPH oxidase. TNF-activation of RFK may enhance the incorporation of FAD in NADPH oxidase, a critical step for the assembly and activation of NADPH oxidase. The polypeptide is Riboflavin kinase (Rfk) (Mus musculus (Mouse)).